Here is a 76-residue protein sequence, read N- to C-terminus: MSDPKYAYPYPAPGNYPQGPPPPVGVPPQYYPPPPPPPPPPPPPRKVGFLEGLLAALCCCCLVDECCCDPTIICFD.

The tract at residues 19-45 is disordered; sequence GPPPPVGVPPQYYPPPPPPPPPPPPPR. The chain crosses the membrane as a helical span at residues 47-63; it reads VGFLEGLLAALCCCCLV.

It belongs to the CYSTM1 family. In terms of assembly, heterodimers. Interacts with CYSTM6, CYSTM7 and WIH1/CYSTM13. In terms of tissue distribution, mostly expressed in stems, siliques, leaves and flowers and, to a lower extent, in roots.

The protein resides in the cell membrane. It is found in the cytoplasm. Its function is as follows. Involved in resistance to abiotic stress. This Arabidopsis thaliana (Mouse-ear cress) protein is Protein CYSTEINE-RICH TRANSMEMBRANE MODULE 11.